Reading from the N-terminus, the 509-residue chain is Cobyric acid synthase (509 aa).

Residues 262–459 (EIKVGIIKLP…IHGIFENDNW (198 aa)) enclose the GATase cobBQ-type domain. Cysteine 343 (nucleophile) is an active-site residue. Histidine 451 is a catalytic residue.

This sequence belongs to the CobB/CobQ family. CobQ subfamily.

Its pathway is cofactor biosynthesis; adenosylcobalamin biosynthesis. Catalyzes amidations at positions B, D, E, and G on adenosylcobyrinic A,C-diamide. NH(2) groups are provided by glutamine, and one molecule of ATP is hydrogenolyzed for each amidation. The polypeptide is Cobyric acid synthase (Prochlorococcus marinus (strain AS9601)).